Here is a 424-residue protein sequence, read N- to C-terminus: Serine--tRNA ligase (424 aa).

Position 231–233 (231–233 (TAE)) interacts with L-serine. 262–264 (RSE) is an ATP binding site. E285 lines the L-serine pocket. 349–352 (EISS) is a binding site for ATP. S385 is a binding site for L-serine.

It belongs to the class-II aminoacyl-tRNA synthetase family. Type-1 seryl-tRNA synthetase subfamily. As to quaternary structure, homodimer. The tRNA molecule binds across the dimer.

It is found in the cytoplasm. The catalysed reaction is tRNA(Ser) + L-serine + ATP = L-seryl-tRNA(Ser) + AMP + diphosphate + H(+). It catalyses the reaction tRNA(Sec) + L-serine + ATP = L-seryl-tRNA(Sec) + AMP + diphosphate + H(+). The protein operates within aminoacyl-tRNA biosynthesis; selenocysteinyl-tRNA(Sec) biosynthesis; L-seryl-tRNA(Sec) from L-serine and tRNA(Sec): step 1/1. Functionally, catalyzes the attachment of serine to tRNA(Ser). Is also able to aminoacylate tRNA(Sec) with serine, to form the misacylated tRNA L-seryl-tRNA(Sec), which will be further converted into selenocysteinyl-tRNA(Sec). The sequence is that of Serine--tRNA ligase from Bacillus cereus (strain B4264).